The sequence spans 300 residues: PTB domain-containing engulfment adapter protein 1 (300 aa).

One can recognise a PID domain in the interval 21–176; it reads AKHFIPYNAK…GGLQKRIQDL (156 aa). A coiled-coil region spans residues 160–199; it reads VETRKQIGGLQKRIQDLETENVELKKQLQVLEEQLMIAQV.

It belongs to the ced-6 family.

Its subcellular location is the cytoplasm. Its function is as follows. May function as an adapter protein. Required for efficient phagocytosis of apoptotic cells. May play a role in the internalization and endosomal trafficking of various lrp1 ligands. This Danio rerio (Zebrafish) protein is PTB domain-containing engulfment adapter protein 1 (gulp1).